A 341-amino-acid polypeptide reads, in one-letter code: Phenylalanine--tRNA ligase alpha subunit (341 aa).

Residue Glu-254 participates in Mg(2+) binding.

This sequence belongs to the class-II aminoacyl-tRNA synthetase family. Phe-tRNA synthetase alpha subunit type 1 subfamily. Tetramer of two alpha and two beta subunits. The cofactor is Mg(2+).

Its subcellular location is the cytoplasm. It catalyses the reaction tRNA(Phe) + L-phenylalanine + ATP = L-phenylalanyl-tRNA(Phe) + AMP + diphosphate + H(+). This chain is Phenylalanine--tRNA ligase alpha subunit, found in Chlorobaculum parvum (strain DSM 263 / NCIMB 8327) (Chlorobium vibrioforme subsp. thiosulfatophilum).